We begin with the raw amino-acid sequence, 109 residues long: Iron-sulfur cluster assembly protein CyaY (109 aa).

It belongs to the frataxin family.

Involved in iron-sulfur (Fe-S) cluster assembly. May act as a regulator of Fe-S biogenesis. The protein is Iron-sulfur cluster assembly protein CyaY of Shewanella putrefaciens (strain CN-32 / ATCC BAA-453).